We begin with the raw amino-acid sequence, 146 residues long: 3-dehydroquinate dehydratase (146 aa).

Catalysis depends on Tyr-24, which acts as the Proton acceptor. Residues Asn-73, His-79, and Asp-86 each contribute to the substrate site. Residue His-99 is the Proton donor of the active site. Substrate-binding positions include 100 to 101 and Arg-110; that span reads LS.

It belongs to the type-II 3-dehydroquinase family. As to quaternary structure, homododecamer.

It carries out the reaction 3-dehydroquinate = 3-dehydroshikimate + H2O. It participates in metabolic intermediate biosynthesis; chorismate biosynthesis; chorismate from D-erythrose 4-phosphate and phosphoenolpyruvate: step 3/7. In terms of biological role, catalyzes a trans-dehydration via an enolate intermediate. The protein is 3-dehydroquinate dehydratase of Shewanella baltica (strain OS185).